Reading from the N-terminus, the 482-residue chain is Zinc metalloproteinase/disintegrin (482 aa).

The first 20 residues, 1 to 20 (MIQVLLVTICLAAFPYQGSS), serve as a signal peptide directing secretion. The propeptide occupies 21 to 189 (MILESGNVND…IKASQLVVTA (169 aa)). In terms of domain architecture, Peptidase M12B spans 197–393 (RYIELVVVAD…HNPQCILNEP (197 aa)). The Ca(2+) site is built by glutamate 200 and aspartate 284. 2 disulfide bridges follow: cysteine 308-cysteine 388 and cysteine 348-cysteine 372. Histidine 333 serves as a coordination point for Zn(2+). Glutamate 334 is a catalytic residue. Zn(2+) is bound by residues histidine 337 and histidine 343. Residues cysteine 388 and asparagine 391 each contribute to the Ca(2+) site. The propeptide occupies 394–409 (LRTDTVSTPVSGNELL). In terms of domain architecture, Disintegrin spans 401–482 (TPVSGNELLE…AGCPRNPFHA (82 aa)). Disulfide bonds link cysteine 415/cysteine 430, cysteine 417/cysteine 425, cysteine 424/cysteine 447, cysteine 438/cysteine 444, cysteine 443/cysteine 468, and cysteine 456/cysteine 475. The short motif at 460 to 462 (RGD) is the Cell attachment site element.

The protein belongs to the venom metalloproteinase (M12B) family. P-II subfamily. P-IId sub-subfamily. In terms of assembly, homodimer; disulfide-linked (disintegrin). The cofactor is Zn(2+). Expressed by the venom gland.

It is found in the secreted. Its function is as follows. This recombinant protein hydrolyzes fibronectin, but has no effect on type I gelatin and type I to V collagens. Selectively hydrolyzes the Aalpha-chain of fibrinogen (FGA), but has no effect on fibrin. Inhibits ADP-induced platelet aggregation. Functionally, recombinant metalloproteinase-disintegrin Mt-d-I (393-408): hydrolyzes type I gelatin, type III and V collagens, but has no effect on type I, II, IV collagens and fibronectin. Selectively hydrolyzes the Aalpha-chain of fibrinogen, but has no effect on fibrin. May induce hemorrhage in vascular tissue. Strongly inhibits ADP-induced platelet aggregation. When concentrated, Mt-d-I undergoes autoproteolytic processing into metalloproteinase and disintegrin. The polypeptide is Zinc metalloproteinase/disintegrin (Gloydius brevicauda (Korean slamosa snake)).